The sequence spans 39 residues: Photosystem II reaction center protein L (39 aa).

The chain crosses the membrane as a helical span at residues 18–38 (SLYLGLLLIAVLGILFSSYFF).

Belongs to the PsbL family. As to quaternary structure, PSII is composed of 1 copy each of membrane proteins PsbA, PsbB, PsbC, PsbD, PsbE, PsbF, PsbH, PsbI, PsbJ, PsbK, PsbL, PsbM, PsbT, PsbX, PsbY, PsbZ, Psb30/Ycf12, peripheral proteins PsbO, CyanoQ (PsbQ), PsbU, PsbV and a large number of cofactors. It forms dimeric complexes.

It localises to the cellular thylakoid membrane. Functionally, one of the components of the core complex of photosystem II (PSII). PSII is a light-driven water:plastoquinone oxidoreductase that uses light energy to abstract electrons from H(2)O, generating O(2) and a proton gradient subsequently used for ATP formation. It consists of a core antenna complex that captures photons, and an electron transfer chain that converts photonic excitation into a charge separation. This subunit is found at the monomer-monomer interface and is required for correct PSII assembly and/or dimerization. The polypeptide is Photosystem II reaction center protein L (Crocosphaera subtropica (strain ATCC 51142 / BH68) (Cyanothece sp. (strain ATCC 51142))).